A 118-amino-acid chain; its full sequence is UPF0102 protein CMM_1377 (118 aa).

The protein belongs to the UPF0102 family.

In Clavibacter michiganensis subsp. michiganensis (strain NCPPB 382), this protein is UPF0102 protein CMM_1377.